Reading from the N-terminus, the 160-residue chain is Large ribosomal subunit protein uL22c (160 aa).

The protein belongs to the universal ribosomal protein uL22 family. Part of the 50S ribosomal subunit.

It localises to the plastid. Its subcellular location is the chloroplast. In terms of biological role, this protein binds specifically to 23S rRNA. Its function is as follows. The globular domain of the protein is located near the polypeptide exit tunnel on the outside of the subunit, while an extended beta-hairpin is found that lines the wall of the exit tunnel in the center of the 70S ribosome. The sequence is that of Large ribosomal subunit protein uL22c (rpl22) from Lepidium virginicum (Virginia pepperweed).